A 59-amino-acid polypeptide reads, in one-letter code: UPF0434 protein LHK_01103 (59 aa).

Belongs to the UPF0434 family.

This chain is UPF0434 protein LHK_01103, found in Laribacter hongkongensis (strain HLHK9).